Reading from the N-terminus, the 141-residue chain is Large ribosomal subunit protein uL11 (141 aa).

The protein belongs to the universal ribosomal protein uL11 family. Part of the ribosomal stalk of the 50S ribosomal subunit. Interacts with L10 and the large rRNA to form the base of the stalk. L10 forms an elongated spine to which L12 dimers bind in a sequential fashion forming a multimeric L10(L12)X complex. In terms of processing, one or more lysine residues are methylated.

Functionally, forms part of the ribosomal stalk which helps the ribosome interact with GTP-bound translation factors. The chain is Large ribosomal subunit protein uL11 from Shouchella clausii (strain KSM-K16) (Alkalihalobacillus clausii).